Here is a 152-residue protein sequence, read N- to C-terminus: Transcriptional regulator MraZ (152 aa).

SpoVT-AbrB domains are found at residues 5 to 52 (ATLV…PLPE) and 81 to 124 (ASEC…DETT).

This sequence belongs to the MraZ family. Forms oligomers.

The protein resides in the cytoplasm. It localises to the nucleoid. Negatively regulates its own expression and that of the subsequent genes in the proximal part of the division and cell wall (dcw) gene cluster. Acts by binding directly to DNA. May also regulate the expression of genes outside the dcw cluster. In Salmonella paratyphi A (strain ATCC 9150 / SARB42), this protein is Transcriptional regulator MraZ.